Reading from the N-terminus, the 593-residue chain is MFGKKKKRVEISAPSNFEHRVHTGFDQHEQKFTGLPRQWQSLIEESARRPKPLIDPACITSIQPGAPKTIVRGSKGAKDGALTLLLDEFENMSVTRSNSLRRESPPPPARAHQENGMLEERAAPARMAPDKAGSRARATGHSEAGSGSGDRRRVGPEKRPKSSRDGPGGPQEASRDKRPLSGPDVSTPQPGSLTSGTKLAAGRPFNTYPRADTDHPPRGAQGEPHTMAPNGPSATGLAAPQSSSSSRPPTRARGAPSPGVLGPHASEPQLAPPARALAAPAVPPAPGPPGPRSPQREPQRVSHEQFRAALQLVVDPGDPRSYLDNFIKIGEGSTGIVCIATVRSSGKLVAVKKMDLRKQQRRELLFNEVVIMRDYRHENVVEMYNSYLVGDELWVVMEFLEGGALTDIVTHTRMNEEQIAAVCLAVLQALAVLHAQGVIHRDIKSDSILLTHDGRVKLSDFGFCAQVSKEVPRRKSLVGTPYWMAPELISRLPYGPEVDIWSLGVMVIEMVDGEPPYFNEPPLKAMKMIRDNLPPRLKNLHKASPSLKGFLDRLLVRDPAQRATAAELLKHPFLTKAGPPASIVPLMRQHRTR.

Residues 11-24 (ISAPSNFEHRVHTG) enclose the CRIB domain. The tract at residues 25–322 (FDQHEQKFTG…VVDPGDPRSY (298 aa)) is linker. Ser41 carries the post-translational modification Phosphoserine. N6-methyllysine is present on Lys78. The interval 95-303 (TRSNSLRRES…PQREPQRVSH (209 aa)) is disordered. Phosphoserine is present on Ser104. The span at 118-133 (LEERAAPARMAPDKAG) shows a compositional bias: basic and acidic residues. Ser148 is modified (phosphoserine). A compositionally biased stretch (basic and acidic residues) spans 149-164 (GDRRRVGPEKRPKSSR). Ser181 is subject to Phosphoserine. Residues 184–197 (DVSTPQPGSLTSGT) are compositionally biased toward polar residues. Thr187 carries the post-translational modification Phosphothreonine. Ser195 carries the phosphoserine modification. Thr207 carries the phosphothreonine modification. Residues 238 to 258 (AAPQSSSSSRPPTRARGAPSP) show a composition bias toward low complexity. Phosphoserine is present on residues Ser257 and Ser266. Residues 267–280 (EPQLAPPARALAAP) are compositionally biased toward low complexity. The span at 281–292 (AVPPAPGPPGPR) shows a compositional bias: pro residues. Ser293 carries the post-translational modification Phosphoserine. A compositionally biased stretch (basic and acidic residues) spans 294–303 (PQREPQRVSH). The Protein kinase domain occupies 323–574 (LDNFIKIGEG…AAELLKHPFL (252 aa)). ATP-binding positions include 329-337 (IGEGSTGIV) and Lys352. Asp442 serves as the catalytic Proton acceptor. Ser476 is subject to Phosphoserine; by autocatalysis.

It belongs to the protein kinase superfamily. STE Ser/Thr protein kinase family. STE20 subfamily. Interacts tightly with GTP-bound but not GDP-bound CDC42/p21 and weakly with RAC1. Interacts with FGFR2 and GRB2. Interacts with INKA1. Interacts with SH3RF2. Interacts with RHOU and PAXI; the PAK4-RHOU complex protects RHOU from ubiquitination and acts as a scaffold to suppport paxillin/PAXI phosphorylation. In terms of processing, autophosphorylated on serine residues when activated by CDC42/p21. Phosphorylated on tyrosine residues upon stimulation of FGFR2. Methylated by SETD6. Polyubiquitinated, leading to its proteasomal degradation.

It localises to the cytoplasm. It carries out the reaction L-seryl-[protein] + ATP = O-phospho-L-seryl-[protein] + ADP + H(+). The catalysed reaction is L-threonyl-[protein] + ATP = O-phospho-L-threonyl-[protein] + ADP + H(+). With respect to regulation, inhibited by INKA1; which inhibits the serine/threonine-protein kinase activity by binding PAK4 in a substrate-like manner. In terms of biological role, serine/threonine protein kinase that plays a role in a variety of different signaling pathways including cytoskeleton regulation, cell migration, growth, proliferation or cell survival. Activation by various effectors including growth factor receptors or active CDC42 and RAC1 results in a conformational change and a subsequent autophosphorylation on several serine and/or threonine residues. Phosphorylates and inactivates the protein phosphatase SSH1, leading to increased inhibitory phosphorylation of the actin binding/depolymerizing factor cofilin. Decreased cofilin activity may lead to stabilization of actin filaments. Phosphorylates LIMK1, a kinase that also inhibits the activity of cofilin. Phosphorylates integrin beta5/ITGB5 and thus regulates cell motility. Phosphorylates ARHGEF2 and activates the downstream target RHOA that plays a role in the regulation of assembly of focal adhesions and actin stress fibers. Stimulates cell survival by phosphorylating the BCL2 antagonist of cell death BAD. Alternatively, inhibits apoptosis by preventing caspase-8 binding to death domain receptors in a kinase independent manner. Plays a role in cell-cycle progression by controlling levels of the cell-cycle regulatory protein CDKN1A and by phosphorylating RAN. Promotes kinase-independent stabilization of RHOU, thereby contributing to focal adhesion disassembly during cell migration. The polypeptide is Serine/threonine-protein kinase PAK 4 (Mus musculus (Mouse)).